The primary structure comprises 651 residues: Acetyl-coenzyme A synthetase 1 (651 aa).

CoA contacts are provided by residues 191–194 (RGGK), threonine 311, and asparagine 335. ATP is bound by residues 387-389 (GEP), 411-416 (DTWWQT), aspartate 500, and arginine 515. A CoA-binding site is contributed by serine 523. Arginine 526 provides a ligand contact to ATP. Mg(2+)-binding residues include valine 537, histidine 539, and valine 542. Arginine 584 contributes to the CoA binding site. Lysine 609 bears the N6-acetyllysine mark.

It belongs to the ATP-dependent AMP-binding enzyme family. Mg(2+) is required as a cofactor. In terms of processing, acetylated. Deacetylation by the SIR2-homolog deacetylase activates the enzyme.

It catalyses the reaction acetate + ATP + CoA = acetyl-CoA + AMP + diphosphate. In terms of biological role, catalyzes the conversion of acetate into acetyl-CoA (AcCoA), an essential intermediate at the junction of anabolic and catabolic pathways. AcsA undergoes a two-step reaction. In the first half reaction, AcsA combines acetate with ATP to form acetyl-adenylate (AcAMP) intermediate. In the second half reaction, it can then transfer the acetyl group from AcAMP to the sulfhydryl group of CoA, forming the product AcCoA. The protein is Acetyl-coenzyme A synthetase 1 of Pseudomonas aeruginosa (strain ATCC 15692 / DSM 22644 / CIP 104116 / JCM 14847 / LMG 12228 / 1C / PRS 101 / PAO1).